A 282-amino-acid polypeptide reads, in one-letter code: Nicotianamine synthase-like 5 protein (282 aa).

This sequence belongs to the nicotianamine synthase (NAS)-like family.

This Hordeum vulgare (Barley) protein is Nicotianamine synthase-like 5 protein (NAS5).